The following is a 392-amino-acid chain: Telomere-binding protein subunit beta (392 aa).

Residues 234–392 are disordered; that stretch reads QQVESVQVQP…ASKASKRSKK (159 aa). The span at 247 to 256 shows a compositional bias: basic residues; that stretch reads GGAKGKKKAA. Residues 257–268 are compositionally biased toward low complexity; sequence TKSATKKTVAAK. Positions 269-284 are enriched in basic and acidic residues; that stretch reads KTAESADVRKSVDKIV. The span at 328–343 shows a compositional bias: polar residues; the sequence is SPSGKKSTKTTDQMTM. The span at 374–384 shows a compositional bias: low complexity; it reads GKASATSGKAS.

In terms of assembly, heterodimer of an alpha and a beta subunit.

It localises to the nucleus. The protein localises to the chromosome. It is found in the telomere. In terms of biological role, may function as protective capping of the single-stranded telomeric overhang. May also participate in telomere length regulation during DNA replication. The sequence is that of Telomere-binding protein subunit beta (STY43) from Stylonychia mytilus (Ciliate).